The sequence spans 2388 residues: Spectrin beta chain, non-erythrocytic 2 (2388 aa).

Position 2 is an N-acetylserine (Ser-2). The segment at 2-278 is actin-binding; it reads SSTLSPTDFD…IITYVATYYH (277 aa). Phosphoserine is present on residues Ser-6 and Ser-31. 2 consecutive Calponin-homology (CH) domains span residues 57-161 and 176-281; these read AVQK…LRFQ and KSAK…HYFS. Spectrin repeat units follow at residues 306–414, 427–527, 532–639, 642–744, 749–849, and 856–954; these read LVEK…LALR, AARF…RERL, ELQK…RLEE, RLWR…QRLA, LYQF…RALE, and TMLS…KAAL. Ser-959 is subject to Phosphoserine. 11 Spectrin repeats span residues 960-1063, 1066-1169, 1174-1266, 1279-1379, 1384-1485, 1489-1586, 1589-1692, 1696-1797, 1801-1904, 1910-2010, and 2017-2078; these read IQNY…SLGE, RLQD…GRLA, FQGF…NQEA, EQQH…ARSL, RAEL…RRLQ, EQHQ…RLEE, RAQQ…RLQE, LCQL…GQVL, YELQ…QLLL, FRFF…DWLQ, and VFGR…LTAL. Position 1073 is a phosphoserine (Ser-1073). The residue at position 1574 (Ser-1574) is a Phosphoserine. Over residues 2080 to 2096 the composition is skewed to basic and acidic residues; sequence ERENEQKRKREEEERRK. Disordered stretches follow at residues 2080 to 2112 and 2124 to 2207; these read EREN…EGSL and DGTQ…HVAT. Polar residues predominate over residues 2124–2163; the sequence is DGTQSKLPPSTQAPSINGVCTDTESSQPLLEQQRLEQSNV. Phosphoserine occurs at positions 2169 and 2199. Positions 2218–2328 constitute a PH domain; sequence QEQMEGTLCR…WLRVVNAAIA (111 aa). The segment at 2333 to 2388 is disordered; sequence ASGEPEEPVVPSASRGLTRAMTMPPVSQPEGSIVLRSKDGREREREKRFSFFKKNK. Thr-2354 bears the Phosphothreonine mark. Residue Ser-2359 is modified to Phosphoserine. Positions 2368–2381 are enriched in basic and acidic residues; it reads RSKDGREREREKRF.

The protein belongs to the spectrin family. In terms of tissue distribution, abundantly transcribed in the brain. Neurons are the predominant cell-type to express the gene. Found abundantly in Purkinje cells.

It is found in the cytoplasm. The protein localises to the cytoskeleton. Its subcellular location is the cell cortex. Probably plays an important role in neuronal membrane skeleton. In Rattus norvegicus (Rat), this protein is Spectrin beta chain, non-erythrocytic 2 (Sptbn2).